Here is a 298-residue protein sequence, read N- to C-terminus: ATP phosphoribosyltransferase (298 aa).

It belongs to the ATP phosphoribosyltransferase family. Long subfamily. It depends on Mg(2+) as a cofactor.

The protein resides in the cytoplasm. The catalysed reaction is 1-(5-phospho-beta-D-ribosyl)-ATP + diphosphate = 5-phospho-alpha-D-ribose 1-diphosphate + ATP. It participates in amino-acid biosynthesis; L-histidine biosynthesis; L-histidine from 5-phospho-alpha-D-ribose 1-diphosphate: step 1/9. Its activity is regulated as follows. Feedback inhibited by histidine. Its function is as follows. Catalyzes the condensation of ATP and 5-phosphoribose 1-diphosphate to form N'-(5'-phosphoribosyl)-ATP (PR-ATP). Has a crucial role in the pathway because the rate of histidine biosynthesis seems to be controlled primarily by regulation of HisG enzymatic activity. The chain is ATP phosphoribosyltransferase from Aliivibrio fischeri (strain ATCC 700601 / ES114) (Vibrio fischeri).